Here is a 141-residue protein sequence, read N- to C-terminus: Nucleoside diphosphate kinase (141 aa).

ATP-binding residues include K11, F59, R87, T93, R104, and N114. H117 functions as the Pros-phosphohistidine intermediate in the catalytic mechanism.

It belongs to the NDK family. In terms of assembly, homotetramer. Mg(2+) is required as a cofactor.

The protein resides in the cytoplasm. The enzyme catalyses a 2'-deoxyribonucleoside 5'-diphosphate + ATP = a 2'-deoxyribonucleoside 5'-triphosphate + ADP. The catalysed reaction is a ribonucleoside 5'-diphosphate + ATP = a ribonucleoside 5'-triphosphate + ADP. Major role in the synthesis of nucleoside triphosphates other than ATP. The ATP gamma phosphate is transferred to the NDP beta phosphate via a ping-pong mechanism, using a phosphorylated active-site intermediate. In Variovorax paradoxus (strain S110), this protein is Nucleoside diphosphate kinase.